A 387-amino-acid chain; its full sequence is Patatin-11 (387 aa).

Positions 1–23 (MATTKSVLVLIFMILATTSSTFA) are cleaved as a signal peptide. The region spanning 32 to 230 (LSTDGGGIKG…TVGDPALLSL (199 aa)) is the PNPLA domain. A GXGXXG motif is present at residues 36–41 (GGGIKG). The short motif at 75 to 79 (GTSTG) is the GXSXG element. The active-site Nucleophile is Ser-77. N-linked (GlcNAc...) asparagine glycosylation is present at Asn-115. Asp-216 serves as the catalytic Proton acceptor. The short motif at 216-218 (DGG) is the DGA/G element. The stretch at 322–385 (ENALNGTTTE…DRKKLRANKA (64 aa)) forms a coiled coil. Asn-326 is a glycosylation site (N-linked (GlcNAc...) asparagine).

This sequence belongs to the patatin family. Tuber.

Its subcellular location is the vacuole. Probable lipolytic acyl hydrolase (LAH), an activity which is thought to be involved in the response of tubers to pathogens. This Solanum tuberosum (Potato) protein is Patatin-11.